The chain runs to 507 residues: Chromosomal replication initiator protein DnaA (507 aa).

Residues 1–87 are domain I, interacts with DnaA modulators; it reads MSVELWQQCV…IGSKRSSAPR (87 aa). A compositionally biased stretch (low complexity) spans 85 to 110; the sequence is APRAAPNAPLAAAQVSQAQANAAPAS. A disordered region spans residues 85–158; that stretch reads APRAAPNAPL…QQAPVRAEQR (74 aa). Positions 87-170 are domain II; sequence RAAPNAPLAA…QVEGALKHTS (84 aa). Residues 126-140 show a composition bias toward basic and acidic residues; it reads QKTEEISEEPSRDSF. The tract at residues 171–387 is domain III, AAA+ region; sequence YLNRTFTFEN…GALKRVIAHS (217 aa). Residues G215, G217, K218, and T219 each coordinate ATP. The segment at 388–507 is domain IV, binds dsDNA; sequence HFMGRDITIE…YKNLLRTLTT (120 aa).

The protein belongs to the DnaA family. In terms of assembly, oligomerizes as a right-handed, spiral filament on DNA at oriC.

The protein resides in the cytoplasm. Functionally, plays an essential role in the initiation and regulation of chromosomal replication. ATP-DnaA binds to the origin of replication (oriC) to initiate formation of the DNA replication initiation complex once per cell cycle. Binds the DnaA box (a 9 base pair repeat at the origin) and separates the double-stranded (ds)DNA. Forms a right-handed helical filament on oriC DNA; dsDNA binds to the exterior of the filament while single-stranded (ss)DNA is stabiized in the filament's interior. The ATP-DnaA-oriC complex binds and stabilizes one strand of the AT-rich DNA unwinding element (DUE), permitting loading of DNA polymerase. After initiation quickly degrades to an ADP-DnaA complex that is not apt for DNA replication. Binds acidic phospholipids. This is Chromosomal replication initiator protein DnaA from Pseudomonas fluorescens (strain Pf0-1).